The chain runs to 387 residues: Small ribosomal subunit protein uS5m (387 aa).

The N-terminal 22 residues, 1 to 22 (MLRSFSHFLQIGSRRQPTYFRC), are a transit peptide targeting the mitochondrion. The tract at residues 33–87 (FKNDPKKELNSNLNEKSVEESSKNETKEQFNSSSIPRESESEGKTASNTSPLSPK) is disordered. Basic and acidic residues predominate over residues 48-60 (KSVEESSKNETKE). Serine 85 is subject to Phosphoserine. The 64-residue stretch at 225-288 (LMFVPLVRRR…GRAVKNMVYI (64 aa)) folds into the S5 DRBM domain.

This sequence belongs to the universal ribosomal protein uS5 family. As to quaternary structure, component of the mitochondrial small ribosomal subunit (mt-SSU). Mature yeast 74S mitochondrial ribosomes consist of a small (37S) and a large (54S) subunit. The 37S small subunit contains a 15S ribosomal RNA (15S mt-rRNA) and at least 32 different proteins. The 54S large subunit contains a 21S rRNA (21S mt-rRNA) and at least 45 different proteins. uS3m, uS4m and uS5m form the narrow entry site of the mRNA channel.

The protein localises to the mitochondrion. In terms of biological role, component of the mitochondrial ribosome (mitoribosome), a dedicated translation machinery responsible for the synthesis of mitochondrial genome-encoded proteins, including at least some of the essential transmembrane subunits of the mitochondrial respiratory chain. The mitoribosomes are attached to the mitochondrial inner membrane and translation products are cotranslationally integrated into the membrane. The protein is Small ribosomal subunit protein uS5m (mrp5) of Schizosaccharomyces pombe (strain 972 / ATCC 24843) (Fission yeast).